We begin with the raw amino-acid sequence, 412 residues long: Cathepsin D (412 aa).

An N-terminal signal peptide occupies residues 1–20 (MQPSSLLPLALCLLAAPASA). Residues 21–64 (LVRIPLHKFTSIRRTMSEVGGSVEDLIAKGPVSKYSQAVPAVTE) constitute a propeptide, activation peptide. An O-linked (GalNAc...) threonine glycan is attached at Thr-63. Positions 79 to 407 (YYGEIGIGTP…DRDNNRVGFA (329 aa)) constitute a Peptidase A1 domain. Disulfide bonds link Cys-91–Cys-160 and Cys-110–Cys-117. Asp-97 is an active-site residue. 2 N-linked (GlcNAc...) asparagine glycosylation sites follow: Asn-134 and Asn-263. Cys-286 and Cys-290 are disulfide-bonded. Residue Asp-295 is part of the active site. A disulfide bridge connects residues Cys-329 and Cys-366.

It belongs to the peptidase A1 family. Consists of a light chain and a heavy chain. Interacts with ADAM30; this leads to activation of CTSD. Interacts with GRN; stabilizes CTSD; increases its proteolytic activity. N- and O-glycosylated. In terms of processing, undergoes proteolytic cleavage and activation by ADAM30. Post-translationally, as well as the major heavy chain which starts at Leu-169, 2 minor forms starting at Gly-170 and Gly-171 have been identified. An additional form starting at Ala-168 has also been identified. As to expression, expressed in the aorta extracellular space (at protein level). Expressed in liver (at protein level).

It is found in the lysosome. It localises to the melanosome. Its subcellular location is the secreted. The protein resides in the extracellular space. The catalysed reaction is Specificity similar to, but narrower than, that of pepsin A. Does not cleave the 4-Gln-|-His-5 bond in B chain of insulin.. Functionally, acid protease active in intracellular protein breakdown. Plays a role in APP processing following cleavage and activation by ADAM30 which leads to APP degradation. Involved in the pathogenesis of several diseases such as breast cancer and possibly Alzheimer disease. This chain is Cathepsin D (CTSD), found in Homo sapiens (Human).